We begin with the raw amino-acid sequence, 66 residues long: MTGLSMDGGGSPKGDVDPFYYDYETVRNGGLIFAGLAFIVGLLILLSRRFRCGGNKKRRQINEDEP.

A helical transmembrane segment spans residues 29–46 (GGLIFAGLAFIVGLLILL).

Belongs to the FXYD family. Regulatory subunit of the sodium/potassium-transporting ATPase which is composed of a catalytic alpha subunit, an auxiliary non-catalytic beta subunit and an additional regulatory subunit. As to expression, expressed in the distal convoluted tubule in the kidney. Found on basolateral membranes of nephron epithelial cells.

The protein resides in the membrane. May be involved in forming the receptor site for cardiac glycoside binding or may modulate the transport function of the sodium ATPase. The polypeptide is Sodium/potassium-transporting ATPase subunit gamma (FXYD2) (Homo sapiens (Human)).